The primary structure comprises 170 residues: Protein Rex (170 aa).

Positions 1–16 are enriched in basic residues; that stretch reads MPKTRRQRTRRARRNR. Disordered stretches follow at residues 1-27 and 69-170; these read MPKT…SQDL and VQST…GEKP. Residues 2–19 carry the Nuclear localization signal, and RNA-binding (RxRE) motif; it reads PKTRRQRTRRARRNRPPT. Residues 57-71 are homomultimerization; it reads PPAYIDMPSWPPVQS. Low complexity predominate over residues 82–95; it reads ALSALLSNTLSLAS. The Nuclear export signal signature appears at 83–94; sequence LSALLSNTLSLA. Residues 124–132 form a homomultimerization region; that stretch reads PSFNQCEST. Residues 143-160 show a composition bias toward low complexity; it reads PSGISSPPSPSPNLASVP. 2 positions are modified to phosphoserine; by host: serine 151 and serine 153. Positions 161–170 are enriched in polar residues; the sequence is KTSTPPGEKP.

This sequence belongs to the deltaretrovirus Rex protein family. As to quaternary structure, homomultimer. Phosphorylation is essential for RNA-binding and function.

The protein localises to the host nucleus. It localises to the host nucleolus. Its subcellular location is the host cytoplasm. In terms of biological role, rex escorts unspliced gag-pro-pol and singly spliced env mRNAs out of the nucleus of infected cells. These mRNAs carry a recognition sequence called Rex responsive element (RxRE or XRE) located at the 3' region of the long terminal repeat (LTR). This function is essential since most HTLV proteins are translated from unspliced or partially spliced pre-mRNAs that cannot exit the nucleus by the pathway used by fully processed cellular mRNAs. This chain is Protein Rex, found in Human T-cell leukemia virus 2 (HTLV-2).